We begin with the raw amino-acid sequence, 413 residues long: Glucose-1-phosphate adenylyltransferase (413 aa).

Alpha-D-glucose 1-phosphate contacts are provided by residues glycine 163, glutamate 179–lysine 180, and serine 197.

This sequence belongs to the bacterial/plant glucose-1-phosphate adenylyltransferase family. Homotetramer.

The enzyme catalyses alpha-D-glucose 1-phosphate + ATP + H(+) = ADP-alpha-D-glucose + diphosphate. The protein operates within glycan biosynthesis; glycogen biosynthesis. Involved in the biosynthesis of ADP-glucose, a building block required for the elongation reactions to produce glycogen. Catalyzes the reaction between ATP and alpha-D-glucose 1-phosphate (G1P) to produce pyrophosphate and ADP-Glc. The polypeptide is Glucose-1-phosphate adenylyltransferase (Parafrankia sp. (strain EAN1pec)).